Reading from the N-terminus, the 229-residue chain is MAKKKAFTPLLYLASLVFLPWWISLSFNKSLESWVTNWWNTRQSEIFLNGIQEKNILEKFIELEEILLLEEMIKEYSETHLQNLRIGIHKETIQFIKIHNEDRIHTILHFSTNIICFVILSGYSIWGNEELVILNSWAQEFLYNLSDTIKAFSILLLTDLCIGFHSPHGWELIIGSVYKDFGFVHNDQILSGLVSTFPVILDTLFKFWIFRYLNRVSPSLVVIYHSMND.

3 helical membrane-spanning segments follow: residues 7 to 27 (FTPL…SLSF), 114 to 134 (IICF…LVIL), and 189 to 209 (ILSG…KFWI).

It belongs to the CemA family.

It localises to the plastid. The protein localises to the chloroplast inner membrane. The enzyme catalyses K(+)(in) + H(+)(out) = K(+)(out) + H(+)(in). Its function is as follows. Contributes to K(+)/H(+) antiport activity by supporting proton efflux to control proton extrusion and homeostasis in chloroplasts in a light-dependent manner to modulate photosynthesis. Prevents excessive induction of non-photochemical quenching (NPQ) under continuous-light conditions. Indirectly promotes efficient inorganic carbon uptake into chloroplasts. This is Potassium/proton antiporter CemA from Panax ginseng (Korean ginseng).